Here is an 85-residue protein sequence, read N- to C-terminus: Beta-toxin BmKAS (85 aa).

Positions 1–19 (MKTVIFLIVSSLLLIGVKT) are cleaved as a signal peptide. An LCN-type CS-alpha/beta domain is found at 20–82 (DNGYLLDKYT…LWNYNTNKCN (63 aa)). Intrachain disulfides connect Cys31–Cys81, Cys35–Cys56, Cys42–Cys63, and Cys46–Cys65.

As to expression, expressed by the venom gland.

The protein localises to the secreted. In terms of biological role, beta toxins bind voltage-independently at site-4 of sodium channels (Nav) and shift the voltage of activation toward more negative potentials thereby affecting sodium channel activation and promoting spontaneous and repetitive firing. It binds to distinct receptor sites of mammal and insect voltage-gated sodium channels. It displays antinociceptive effect in rat models, which is due to its specific modulation of sodium channels of sensory neurons. It also significantly stimulates the binding of [3H]-ryanodine to ryanodine receptors on the sarcoplasmic reticulum of the skeletal muscle through an indirect mechanism. And it promotes noradrenaline release from the rat hippocampus slice. The chain is Beta-toxin BmKAS from Olivierus martensii (Manchurian scorpion).